Reading from the N-terminus, the 881-residue chain is Armadillo repeat-containing protein 3 (881 aa).

ARM repeat units follow at residues 15–54 (DVFD…KFAL), 57–96 (EENK…ILAS), 98–138 (SDVK…NMSV), 140–179 (YTGK…NLVQ), 181–220 (FQCR…VITC), 222–262 (KEAR…NCLE), 264–304 (MDTM…KAAY), 306–345 (PENR…ALCE), 346–385 (NLSC…NLTT), 388–427 (PANA…NMAT), 429–468 (EPLR…ATAC), and 470–509 (VEAR…VCAG). Residues Cys-507 and Cys-518 are each lipidated (S-palmitoyl cysteine). The tract at residues 605–659 (NNKSDTSPPPSMEDKSSDVGYGRSISSSSSLRRGSKEKANAIFGSPTEEKSEPAS) is disordered. Residues 622–636 (DVGYGRSISSSSSLR) are compositionally biased toward low complexity.

Homodimer. Interacts with PIK3C3, PIK3R4 and BECN1. Interacts (via ARM domains) with ATG14. Palmitoylation is important for its function in autophagy. As to expression, testis-specific.

In terms of biological role, essential for male fertility and sperm motility. During spermatogenesis, promotes the autophagic degradation of excessive ribosomes, providing energy resources for mitochondria and thus ensuring sperm flagellar motility. This Mus musculus (Mouse) protein is Armadillo repeat-containing protein 3 (Armc3).